A 498-amino-acid chain; its full sequence is Cytochrome P450 71B31 (498 aa).

The chain crosses the membrane as a helical span at residues 3-23 (MFLGLLFLFPLFFILFKNLLP). Residue C441 participates in heme binding.

This sequence belongs to the cytochrome P450 family. Heme is required as a cofactor.

The protein localises to the membrane. This chain is Cytochrome P450 71B31 (CYP71B31), found in Arabidopsis thaliana (Mouse-ear cress).